Consider the following 612-residue polypeptide: Lipoma-preferred partner (612 aa).

2 disordered regions span residues methionine 1–aspartate 118 and glutamate 132–proline 219. Polar residues predominate over residues threonine 26 to glutamine 40. Residues proline 41–proline 53 are compositionally biased toward low complexity. Lysine 108 is subject to N6-acetyllysine. Phosphoserine occurs at positions 116 and 151. Composition is skewed to polar residues over residues glutamine 143 to valine 158 and proline 171 to lysine 181. A compositionally biased stretch (pro residues) spans glutamine 183 to valine 193. Over residues serine 209–proline 219 the composition is skewed to polar residues. Phosphotyrosine is present on residues tyrosine 244 and tyrosine 301. Residues tyrosine 307–phenylalanine 387 form a disordered region. The segment covering aspartate 314–proline 323 has biased composition (polar residues). Residue lysine 327 forms a Glycyl lysine isopeptide (Lys-Gly) (interchain with G-Cter in SUMO1) linkage. Residue threonine 333 is modified to Phosphothreonine. Position 375 is a phosphoserine (serine 375). LIM zinc-binding domains lie at glycine 414–leucine 473, glutamate 474–proline 534, and arginine 535–valine 603.

Belongs to the zyxin/ajuba family. As to quaternary structure, interacts with VASP, with PDZ domains of SCRIB and with ACTN1/alpha-actinin. As to expression, expressed in a wide variety of tissues but no or very low expression in brain and peripheral leukocytes.

The protein localises to the nucleus. It is found in the cytoplasm. The protein resides in the cell junction. It localises to the cell membrane. May play a structural role at sites of cell adhesion in maintaining cell shape and motility. In addition to these structural functions, it may also be implicated in signaling events and activation of gene transcription. May be involved in signal transduction from cell adhesion sites to the nucleus allowing successful integration of signals arising from soluble factors and cell-cell adhesion sites. Also suggested to serve as a scaffold protein upon which distinct protein complexes are assembled in the cytoplasm and in the nucleus. In Homo sapiens (Human), this protein is Lipoma-preferred partner (LPP).